A 501-amino-acid chain; its full sequence is Lycopene beta cyclase, chloroplastic (501 aa).

Residues 1-48 constitute a chloroplast transit peptide; sequence MDTLLKTPNKLDFFIPQFHGFERLCSNNPYHSRVRLGVKKRAIKIVSS. Val49 is modified (N-acetylvaline). 85–113 provides a ligand contact to NAD(+); sequence LAIVGGGPAGLAVAQQVSEAGLSVCSIDP.

Belongs to the lycopene cyclase family.

Its subcellular location is the plastid. The protein localises to the chloroplast. The catalysed reaction is a carotenoid psi-end group = a carotenoid beta-end derivative. It participates in carotenoid biosynthesis; beta-carotene biosynthesis. Its pathway is carotenoid biosynthesis; beta-zeacarotene biosynthesis. Functionally, involved in carotenoid biosynthesis. Catalyzes the double cyclization reaction which converts lycopene to beta-carotene and neurosporene to beta-zeacarotene. Major lycopene beta-cyclase that does not seem to be involved in neoxanthin synthesis. Involved in salt tolerance improvement by increasing synthesis of carotenoids, which impairs reactive oxygen species (ROS) and protects the photosynthetic system under salt stress. The sequence is that of Lycopene beta cyclase, chloroplastic from Arabidopsis thaliana (Mouse-ear cress).